An 804-amino-acid chain; its full sequence is Protein translocase subunit SecA (804 aa).

ATP contacts are provided by residues glutamine 87, 105–109 (GEGKT), and aspartate 500.

The protein belongs to the SecA family. As to quaternary structure, monomer and homodimer. Part of the essential Sec protein translocation apparatus which comprises SecA, SecYEG and auxiliary proteins SecDF-YajC and YidC.

It is found in the cell inner membrane. It localises to the cytoplasm. It catalyses the reaction ATP + H2O + cellular proteinSide 1 = ADP + phosphate + cellular proteinSide 2.. In terms of biological role, part of the Sec protein translocase complex. Interacts with the SecYEG preprotein conducting channel. Has a central role in coupling the hydrolysis of ATP to the transfer of proteins into and across the cell membrane, serving both as a receptor for the preprotein-SecB complex and as an ATP-driven molecular motor driving the stepwise translocation of polypeptide chains across the membrane. This Neorickettsia sennetsu (strain ATCC VR-367 / Miyayama) (Ehrlichia sennetsu) protein is Protein translocase subunit SecA.